The primary structure comprises 131 residues: Ribonuclease P protein component (131 aa).

Belongs to the RnpA family. As to quaternary structure, consists of a catalytic RNA component (M1 or rnpB) and a protein subunit.

It catalyses the reaction Endonucleolytic cleavage of RNA, removing 5'-extranucleotides from tRNA precursor.. RNaseP catalyzes the removal of the 5'-leader sequence from pre-tRNA to produce the mature 5'-terminus. It can also cleave other RNA substrates such as 4.5S RNA. The protein component plays an auxiliary but essential role in vivo by binding to the 5'-leader sequence and broadening the substrate specificity of the ribozyme. The polypeptide is Ribonuclease P protein component (Stutzerimonas stutzeri (strain A1501) (Pseudomonas stutzeri)).